Here is a 264-residue protein sequence, read N- to C-terminus: MKIDLITIFPEFFRGPLDHGIVSRAQKAGLVEITIRDLREFTHDRHRTVDDRPFGGGEGMVLKPEPIFECLEAMEIPPRGNRENVQVLVLSPQGRLFDQTMALELSKLDRLVLINGRYEGVDERVSEVLADGEISVGDFVLSGGELGSAIIVDAVTRLLPGALGNADSARQESFTAVAKEISEGPDSTCASGGLLDYPHYTRPAEFRGYVVPQVLQDGNHAEIQRWRRRRALEKTFKNRPDLLEGAELSKEDQKYLAQLRAGKD.

S-adenosyl-L-methionine contacts are provided by residues G116 and 136-141 (VGDFVL).

This sequence belongs to the RNA methyltransferase TrmD family. Homodimer.

The protein resides in the cytoplasm. It carries out the reaction guanosine(37) in tRNA + S-adenosyl-L-methionine = N(1)-methylguanosine(37) in tRNA + S-adenosyl-L-homocysteine + H(+). In terms of biological role, specifically methylates guanosine-37 in various tRNAs. The chain is tRNA (guanine-N(1)-)-methyltransferase from Koribacter versatilis (strain Ellin345).